The sequence spans 350 residues: MTYFIDVPTMSDLVHDIGVAPFIGELAAALRDDFKRWQAFDKSARVASHSEVGVIELMPVADKSRYAFKYVNGHPANTARNLHTVMAFGVLADVDSGYPVLLSELTIATALRTAATSLMAAQALARPNARKMALIGNGAQSEFQALAFHKHLGIEEIVAYDTDPLATAKLIANLKEYSGLTIRRASSVAEAVKGVDIITTVTADKAYATIITPDMLEPGMHLNAVGGDCPGKTELHADVLRNARVFVEYEPQTRIEGEIQQLPADFPVVDLWRVLRGETEGRQSDSQVTVFDSVGFALEDYTVLRYVLQQAEKRGMGTKIDLVPWVEDDPKDLFSHTRGRAGKRRIRRVA.

L-ornithine-binding residues include Arg45 and Lys69. Residues Thr84, Arg112, 139 to 140 (AQ), Asp161, Thr202, 225 to 228 (VGGD), Lys232, and Ser293 contribute to the NAD(+) site. Arg112 serves as a coordination point for L-ornithine. Asp228 is an L-ornithine binding site. Asp228 serves as the catalytic Proton donor/acceptor. Position 294 (Val294) interacts with L-ornithine. Residue Lys331 coordinates NAD(+).

It belongs to the ornithine cyclodeaminase/mu-crystallin family. As to quaternary structure, homodimer. Requires NAD(+) as cofactor.

It catalyses the reaction L-ornithine = L-proline + NH4(+). It participates in amino-acid biosynthesis; L-proline biosynthesis; L-proline from L-ornithine: step 1/1. Functionally, catalyzes the conversion of L-ornithine into L-proline with release of ammonia. Is likely involved in the L-ornithine degradation pathway that allows P.putida to utilize this compound as sole carbon and nitrogen source. The protein is Ornithine cyclodeaminase of Pseudomonas putida (strain ATCC 47054 / DSM 6125 / CFBP 8728 / NCIMB 11950 / KT2440).